The sequence spans 151 residues: Methylglyoxal synthase (151 aa).

Residues 6 to 151 (RVMPAHKHIA…DYDAYLAERV (146 aa)) enclose the MGS-like domain. Residues histidine 19, lysine 23, 45-48 (TGTT), and 65-66 (SG) each bind substrate. Aspartate 71 (proton donor/acceptor) is an active-site residue. A substrate-binding site is contributed by histidine 98.

This sequence belongs to the methylglyoxal synthase family.

The catalysed reaction is dihydroxyacetone phosphate = methylglyoxal + phosphate. In terms of biological role, catalyzes the formation of methylglyoxal from dihydroxyacetone phosphate. This chain is Methylglyoxal synthase, found in Aliivibrio fischeri (strain ATCC 700601 / ES114) (Vibrio fischeri).